A 2497-amino-acid polypeptide reads, in one-letter code: Integrator complex subunit 1 homolog (2497 aa).

The span at 1–10 shows a compositional bias: basic residues; the sequence is MMLNKIKRSK. 6 disordered regions span residues 1–151, 300–337, 946–965, 1028–1108, 1234–1292, and 1572–1604; these read MMLN…NNNI, QPQPPQQQQTKQPVNIKTQPQQQQQQQQQPQPQQIKKS, QQQQQQLQTPQQQQQQQQPT, TTTT…TSSS, INNN…NQKS, and NNNNNNNNNNNNNNNNNNNNNNNNNNNNNNNIT. Low complexity-rich tracts occupy residues 37–46, 60–151, 305–333, 946–963, and 1028–1058; these read SDNNNNNSND, NNSI…NNNI, QQQQTKQPVNIKTQPQQQQQQQQQPQPQQ, QQQQQQLQTPQQQQQQQQ, and TTTTTSSTTTTTTTTTSTTTSTSTSSSSSSL. The span at 1075-1091 shows a compositional bias: polar residues; that stretch reads SGLSGSSNGINQSSDSI. Low complexity-rich tracts occupy residues 1097-1108, 1234-1265, 1272-1289, and 1572-1602; these read STSPTTTTTSSS, INNNDNNNNNNNNNNNNNNNNNNNNNDNNINK, HSNSMANNNLPNNNNKNN, and NNNNNNNNNNNNNNNNNNNNNNNNNNNNNNN. Positions 1645–1675 form a coiled coil; that stretch reads RILKNTTQQKQQKQQQKESVQKSIQSLSKLI. Residues 2084–2115 show a composition bias toward low complexity; sequence QQQQQQQQQQQQQQKQQSNNSNNINNNNNNNN. 2 disordered regions span residues 2084 to 2123 and 2329 to 2350; these read QQQQQQQQQQQQQQKQQSNNSNNINNNNNNNNSEKKQKSK and NNNNNNNNNNNNNNNNNNNNNN.

The protein belongs to the Integrator subunit 1 family. As to quaternary structure, component of the Integrator complex. The core complex associates with protein phosphatase 2A subunits to form the Integrator-PP2A (INTAC) complex.

Its subcellular location is the nucleus. In terms of biological role, component of the integrator complex, a multiprotein complex that terminates RNA polymerase II (Pol II) transcription in the promoter-proximal region of genes. The integrator complex provides a quality checkpoint during transcription elongation by driving premature transcription termination of transcripts that are unfavorably configured for transcriptional elongation: the complex terminates transcription by (1) catalyzing dephosphorylation of the C-terminal domain (CTD) of Pol II subunit polr2a, (2) degrading the exiting nascent RNA transcript via endonuclease activity and (3) promoting the release of Pol II from bound DNA. The integrator complex is also involved in terminating the synthesis of non-coding Pol II transcripts, such as enhancer RNAs (eRNAs), small nuclear RNAs (snRNAs), telomerase RNAs and long non-coding RNAs (lncRNAs). The chain is Integrator complex subunit 1 homolog (ints1) from Dictyostelium discoideum (Social amoeba).